The chain runs to 316 residues: Methionyl-tRNA formyltransferase (316 aa).

108–111 (SLLP) contacts (6S)-5,6,7,8-tetrahydrofolate.

It belongs to the Fmt family.

The enzyme catalyses L-methionyl-tRNA(fMet) + (6R)-10-formyltetrahydrofolate = N-formyl-L-methionyl-tRNA(fMet) + (6S)-5,6,7,8-tetrahydrofolate + H(+). In terms of biological role, attaches a formyl group to the free amino group of methionyl-tRNA(fMet). The formyl group appears to play a dual role in the initiator identity of N-formylmethionyl-tRNA by promoting its recognition by IF2 and preventing the misappropriation of this tRNA by the elongation apparatus. This is Methionyl-tRNA formyltransferase from Heliobacterium modesticaldum (strain ATCC 51547 / Ice1).